The primary structure comprises 180 residues: Adenine phosphoribosyltransferase (180 aa).

This sequence belongs to the purine/pyrimidine phosphoribosyltransferase family. As to quaternary structure, homodimer.

The protein resides in the cytoplasm. It carries out the reaction AMP + diphosphate = 5-phospho-alpha-D-ribose 1-diphosphate + adenine. It participates in purine metabolism; AMP biosynthesis via salvage pathway; AMP from adenine: step 1/1. Functionally, catalyzes a salvage reaction resulting in the formation of AMP, that is energically less costly than de novo synthesis. The chain is Adenine phosphoribosyltransferase from Marinomonas sp. (strain MWYL1).